We begin with the raw amino-acid sequence, 62 residues long: Photosystem II reaction center protein Z (62 aa).

The next 2 helical transmembrane spans lie at 8–28 and 41–61; these read AVFA…VVFA and FSGT…NSLI.

It belongs to the PsbZ family. As to quaternary structure, PSII is composed of 1 copy each of membrane proteins PsbA, PsbB, PsbC, PsbD, PsbE, PsbF, PsbH, PsbI, PsbJ, PsbK, PsbL, PsbM, PsbT, PsbY, PsbZ, Psb30/Ycf12, at least 3 peripheral proteins of the oxygen-evolving complex and a large number of cofactors. It forms dimeric complexes.

Its subcellular location is the plastid. It is found in the chloroplast thylakoid membrane. Its function is as follows. May control the interaction of photosystem II (PSII) cores with the light-harvesting antenna, regulates electron flow through the 2 photosystem reaction centers. PSII is a light-driven water plastoquinone oxidoreductase, using light energy to abstract electrons from H(2)O, generating a proton gradient subsequently used for ATP formation. This Spinacia oleracea (Spinach) protein is Photosystem II reaction center protein Z.